Reading from the N-terminus, the 198-residue chain is 7-methyl-GTP pyrophosphatase (198 aa).

Catalysis depends on aspartate 75, which acts as the Proton acceptor.

It belongs to the Maf family. YceF subfamily. A divalent metal cation serves as cofactor.

The protein resides in the cytoplasm. The catalysed reaction is N(7)-methyl-GTP + H2O = N(7)-methyl-GMP + diphosphate + H(+). In terms of biological role, nucleoside triphosphate pyrophosphatase that hydrolyzes 7-methyl-GTP (m(7)GTP). May have a dual role in cell division arrest and in preventing the incorporation of modified nucleotides into cellular nucleic acids. The sequence is that of 7-methyl-GTP pyrophosphatase from Bartonella quintana (strain Toulouse) (Rochalimaea quintana).